Consider the following 492-residue polypeptide: NADH-quinone oxidoreductase subunit N 2 (492 aa).

14 consecutive transmembrane segments (helical) span residues 16–36, 44–64, 87–107, 118–138, 140–160, 175–195, 216–236, 250–270, 282–302, 309–329, 333–353, 381–401, 416–438, and 455–475; these read ILPE…DALI, PLGY…ACQA, FSLF…LVSF, GEYY…TSAT, LVLI…LAAM, FLLG…IFGA, PIIY…VAAA, PSPI…AVLL, FWIV…GALV, LLAY…AAAK, ISAA…AFAV, AAIL…GGFF, VWLT…RIIV, and PFGL…LGVL.

It belongs to the complex I subunit 2 family. As to quaternary structure, NDH-1 is composed of 14 different subunits. Subunits NuoA, H, J, K, L, M, N constitute the membrane sector of the complex.

The protein resides in the cell inner membrane. It catalyses the reaction a quinone + NADH + 5 H(+)(in) = a quinol + NAD(+) + 4 H(+)(out). In terms of biological role, NDH-1 shuttles electrons from NADH, via FMN and iron-sulfur (Fe-S) centers, to quinones in the respiratory chain. The immediate electron acceptor for the enzyme in this species is believed to be ubiquinone. Couples the redox reaction to proton translocation (for every two electrons transferred, four hydrogen ions are translocated across the cytoplasmic membrane), and thus conserves the redox energy in a proton gradient. The polypeptide is NADH-quinone oxidoreductase subunit N 2 (Koribacter versatilis (strain Ellin345)).